We begin with the raw amino-acid sequence, 544 residues long: Probable protein kinase UbiB (544 aa).

The Protein kinase domain occupies 123 to 505; the sequence is EFDEQALASA…GRQKSHNVRS (383 aa). ATP contacts are provided by residues 129 to 137 and K156; that span reads LASASIAQV. The active-site Proton acceptor is the D291. The helical transmembrane segment at 522 to 540 threads the bilayer; sequence LPLWLSCGTLVTVLLVLLL.

The protein belongs to the ABC1 family. UbiB subfamily.

The protein localises to the cell inner membrane. It functions in the pathway cofactor biosynthesis; ubiquinone biosynthesis [regulation]. Is probably a protein kinase regulator of UbiI activity which is involved in aerobic coenzyme Q (ubiquinone) biosynthesis. This chain is Probable protein kinase UbiB, found in Actinobacillus pleuropneumoniae serotype 5b (strain L20).